The chain runs to 1389 residues: DNA-directed RNA polymerase subunit beta (1389 aa).

It belongs to the RNA polymerase beta chain family. As to quaternary structure, in plastids the minimal PEP RNA polymerase catalytic core is composed of four subunits: alpha, beta, beta', and beta''. When a (nuclear-encoded) sigma factor is associated with the core the holoenzyme is formed, which can initiate transcription.

The protein localises to the plastid. Its subcellular location is the chloroplast. It catalyses the reaction RNA(n) + a ribonucleoside 5'-triphosphate = RNA(n+1) + diphosphate. Functionally, DNA-dependent RNA polymerase catalyzes the transcription of DNA into RNA using the four ribonucleoside triphosphates as substrates. The chain is DNA-directed RNA polymerase subunit beta from Phaeodactylum tricornutum (strain CCAP 1055/1).